The sequence spans 2671 residues: Stalled ribosome sensor GCN1 (2671 aa).

Residue A2 is modified to N-acetylalanine. HEAT repeat units follow at residues 140-178, 257-293, 294-331, 385-423, 425-459, 460-503, 560-597, 599-636, 697-732, and 733-770; these read NKLV…ENPG, EFKD…LDLS, QYAM…QCSD, IVAE…EVPK, LTEW…GDTL, LQAL…SVAD, NKVQ…SLGG, KLAH…AGKA, DPEA…SLSV, and LSPD…QTPA. Position 729 is a phosphoserine (S729). S786 is subject to Phosphoserine. A coiled-coil region spans residues 804–863; the sequence is QIIELELKEEIKKKKGIKEEVQLTSKQKEMLQAQLDREAQVRRRLQELDGELEAALGLLD. HEAT repeat units lie at residues 879–925, 979–1016, 1035–1072, 1078–1115, 1155–1192, 1210–1250, 1251–1289, 1290–1332, 1335–1372, 1374–1410, 1413–1451, 1455–1492, 1493–1530, 1534–1571, 1573–1609, 1611–1648, 1653–1690, 1692–1729, 1731–1769, 1773–1810, 1812–1848, 1921–1958, 1959–1996, 2001–2038, 2039–2076, 2078–2106, 2107–2146, 2147–2184, 2188–2225, 2259–2296, 2301–2338, 2339–2380, 2382–2417, 2422–2459, 2546–2583, and 2588–2625; these read VLVD…HVTL, SLVF…QAQL, LPRV…SSSG, FAEQ…VLPA, DLQP…RYQR, YRPP…YLDS, SQVK…THGK, ENVN…HLDK, PKVK…AIKE, AGGM…GLGI, LKQQ…MLGK, PYVV…NLSA, HGVK…CAPK, SCLP…VIRN, EILA…HFID, PSLA…LTDQ, PYLP…GMGE, CFED…GLGV, KLEK…TFGD, PYVG…MYAE, AIAL…HISG, EILP…KLGE, KILP…STSR, YFSE…TIGH, QALE…SRVV, PYLV…DALT, RHLG…VEDD, TGHR…RSKA, SHLR…KLDA, KGVT…LTSA, PSVV…AKVG, IALK…IHIK, DPLF…GAGA, VIRK…FLTE, QLPA…DPLP, and QAIK…MRQG. An RWDBD region region spans residues 2260 to 2408; it reads GVTSILPVLR…GVRDTMLQAL (149 aa). Residue S2276 is modified to Phosphoserine. Residues 2627–2661 form an HEAT 47; degenerate repeat; it reads EVFQSLSKILDVASLEVLNEVNRRSLKKLASQADS.

It belongs to the GCN1 family. In terms of assembly, interacts with EIF2AK4/GCN2; this interaction stimulates the EIF2AK4/GCN2 kinase activity and is impaired by IMPACT upon a variety of stress conditions, such as amino acid depletion, UV-C irradiation, proteasome inhibitor treatment and glucose deprivation. Interacts with IMPACT; this prevents the interaction of GCN1 with EIF2AK4/GCN2 and inhibits EIF2AK4/GCN2 kinase activity. Interacts with RNF14; interaction takes place following ribosome stalling and promotes recruitment of RNF14. Ubiquitously expressed. Expressed in skeletal muscules, ovary and testis.

It localises to the cytoplasm. Ribosome collision sensor that plays a key role in the RNF14-RNF25 translation quality control pathway, a pathway that takes place when a ribosome has stalled during translation, and which promotes ubiquitination and degradation of translation factors on stalled ribosomes. Directly binds to the ribosome and acts as a sentinel for colliding ribosomes: activated following ribosome stalling and promotes recruitment of RNF14, which directly ubiquitinates EEF1A1/eEF1A, leading to its degradation. In addition to EEF1A1/eEF1A, the RNF14-RNF25 translation quality control pathway mediates degradation of ETF1/eRF1 and ubiquitination of ribosomal protein. GCN1 also acts as a positive activator of the integrated stress response (ISR) by mediating activation of EIF2AK4/GCN2 in response to amino acid starvation. Interaction with EIF2AK4/GCN2 on translating ribosomes stimulates EIF2AK4/GCN2 kinase activity, leading to phosphorylation of eukaryotic translation initiation factor 2 (eIF-2-alpha/EIF2S1). EIF2S1/eIF-2-alpha phosphorylation converts EIF2S1/eIF-2-alpha into a global protein synthesis inhibitor, leading to a global attenuation of cap-dependent translation, and thus to a reduced overall utilization of amino acids, while concomitantly initiating the preferential translation of ISR-specific mRNAs, such as the transcriptional activator ATF4, and hence allowing ATF4-mediated reprogramming of amino acid biosynthetic gene expression to alleviate nutrient depletion. This Homo sapiens (Human) protein is Stalled ribosome sensor GCN1.